The sequence spans 603 residues: Probable methyltransferase PMT20 (603 aa).

The Cytoplasmic portion of the chain corresponds to 1-16 (MKSGKQSSQPEKGTSR). Residues 17 to 37 (ILSLTVLFIAFCGFSFYLGGI) traverse the membrane as a helical; Signal-anchor for type II membrane protein segment. Topologically, residues 38–603 (FCSERDKIVA…KLWFSSNQTS (566 aa)) are lumenal. N-linked (GlcNAc...) asparagine glycosylation is found at Asn313 and Asn600.

The protein belongs to the methyltransferase superfamily.

Its subcellular location is the golgi apparatus membrane. This Arabidopsis thaliana (Mouse-ear cress) protein is Probable methyltransferase PMT20.